We begin with the raw amino-acid sequence, 296 residues long: Cytidine deaminase (296 aa).

CMP/dCMP-type deaminase domains are found at residues 47 to 167 (SQDE…FGPA) and 186 to 296 (ESAD…VDPV). Residue 88–90 (NLE) coordinates substrate. H101 contacts Zn(2+). Catalysis depends on E103, which acts as the Proton donor. Zn(2+) is bound by residues C128 and C131.

This sequence belongs to the cytidine and deoxycytidylate deaminase family. Homodimer. It depends on Zn(2+) as a cofactor.

It carries out the reaction cytidine + H2O + H(+) = uridine + NH4(+). The catalysed reaction is 2'-deoxycytidine + H2O + H(+) = 2'-deoxyuridine + NH4(+). Functionally, this enzyme scavenges exogenous and endogenous cytidine and 2'-deoxycytidine for UMP synthesis. This chain is Cytidine deaminase, found in Shewanella loihica (strain ATCC BAA-1088 / PV-4).